The sequence spans 426 residues: 26S proteasome regulatory subunit 7B (426 aa).

209–216 contacts ATP; sequence GPPGTGKT.

The protein belongs to the AAA ATPase family.

It localises to the cytoplasm. The protein resides in the nucleus. In terms of biological role, the 26S proteasome is involved in the ATP-dependent degradation of ubiquitinated proteins. The regulatory (or ATPase) complex confers ATP dependency and substrate specificity to the 26S complex. The sequence is that of 26S proteasome regulatory subunit 7B (RPT1B) from Oryza sativa subsp. japonica (Rice).